Reading from the N-terminus, the 588-residue chain is Aspartate--tRNA ligase (588 aa).

E172 lines the L-aspartate pocket. The interval 196–199 (QLFK) is aspartate. Position 218 (R218) interacts with L-aspartate. ATP is bound by residues 218-220 (RDE) and Q227. H449 is a binding site for L-aspartate. ATP is bound at residue E483. R490 provides a ligand contact to L-aspartate. 535–538 (GLDR) serves as a coordination point for ATP.

It belongs to the class-II aminoacyl-tRNA synthetase family. Type 1 subfamily. In terms of assembly, homodimer.

The protein resides in the cytoplasm. It carries out the reaction tRNA(Asp) + L-aspartate + ATP = L-aspartyl-tRNA(Asp) + AMP + diphosphate. Catalyzes the attachment of L-aspartate to tRNA(Asp) in a two-step reaction: L-aspartate is first activated by ATP to form Asp-AMP and then transferred to the acceptor end of tRNA(Asp). The polypeptide is Aspartate--tRNA ligase (Haemophilus influenzae (strain PittEE)).